The sequence spans 179 residues: Crossover junction endodeoxyribonuclease RuvC (179 aa).

Active-site residues include aspartate 14, glutamate 74, and aspartate 147. Residues aspartate 14, glutamate 74, and aspartate 147 each coordinate Mg(2+).

The protein belongs to the RuvC family. In terms of assembly, homodimer which binds Holliday junction (HJ) DNA. The HJ becomes 2-fold symmetrical on binding to RuvC with unstacked arms; it has a different conformation from HJ DNA in complex with RuvA. In the full resolvosome a probable DNA-RuvA(4)-RuvB(12)-RuvC(2) complex forms which resolves the HJ. Mg(2+) is required as a cofactor.

The protein resides in the cytoplasm. The enzyme catalyses Endonucleolytic cleavage at a junction such as a reciprocal single-stranded crossover between two homologous DNA duplexes (Holliday junction).. Functionally, the RuvA-RuvB-RuvC complex processes Holliday junction (HJ) DNA during genetic recombination and DNA repair. Endonuclease that resolves HJ intermediates. Cleaves cruciform DNA by making single-stranded nicks across the HJ at symmetrical positions within the homologous arms, yielding a 5'-phosphate and a 3'-hydroxyl group; requires a central core of homology in the junction. The consensus cleavage sequence is 5'-(A/T)TT(C/G)-3'. Cleavage occurs on the 3'-side of the TT dinucleotide at the point of strand exchange. HJ branch migration catalyzed by RuvA-RuvB allows RuvC to scan DNA until it finds its consensus sequence, where it cleaves and resolves the cruciform DNA. This chain is Crossover junction endodeoxyribonuclease RuvC, found in Rubrobacter xylanophilus (strain DSM 9941 / JCM 11954 / NBRC 16129 / PRD-1).